A 161-amino-acid polypeptide reads, in one-letter code: Ribosome maturation factor RimP (161 aa).

This sequence belongs to the RimP family.

The protein localises to the cytoplasm. In terms of biological role, required for maturation of 30S ribosomal subunits. The protein is Ribosome maturation factor RimP of Pelobacter propionicus (strain DSM 2379 / NBRC 103807 / OttBd1).